Here is a 116-residue protein sequence, read N- to C-terminus: Large ribosomal subunit protein bL17 (116 aa).

This sequence belongs to the bacterial ribosomal protein bL17 family. As to quaternary structure, part of the 50S ribosomal subunit. Contacts protein L32.

This chain is Large ribosomal subunit protein bL17, found in Picosynechococcus sp. (strain ATCC 27264 / PCC 7002 / PR-6) (Agmenellum quadruplicatum).